The sequence spans 421 residues: AA11 family lytic polysaccharide monooxygenase (421 aa).

Positions 1 to 19 (MFSKAFLSAALLGAAAVEG) are cleaved as a signal peptide. His-20, His-79, and Glu-93 together coordinate Cu(+). Disulfide bonds link Cys-48–Cys-162, Cys-84–Cys-110, and Cys-201–Cys-235. Asn-117 carries an N-linked (GlcNAc...) asparagine glycan. The segment at 231–349 (GSQACTGTPT…SSSSSSSGAL (119 aa)) is disordered. Over residues 247–285 (TAGSSGSSGSSSGSSSGGSSSSAAGSGATAPPAPAVSST) the composition is skewed to low complexity. The span at 304–314 (SPAQPTHTSAP) shows a compositional bias: polar residues. The segment covering 315–349 (SGGSSSGSGSSSGSNSGSSSGSSSSSSSSSSSGAL) has biased composition (low complexity).

This sequence belongs to the polysaccharide monooxygenase AA11 family. Cu(2+) serves as cofactor.

In terms of biological role, lytic polysaccharide monooxygenase (LPMO) that depolymerizes chitin via the oxidation of scissile beta-(1-4)-glycosidic bonds, yielding C1 or C4 oxidation products. Catalysis by LPMOs requires the reduction of the active-site copper from Cu(II) to Cu(I) by a reducing agent and H(2)O(2) or O(2) as a cosubstrate. Active on chitin but has no activity on other substrates, including diverse mannans, cellulose and starch (data not shown). Primary chain cleavage yields predominantly aldonic acid oligosaccharides with even-numbered degrees of polymerization. This chain is AA11 family lytic polysaccharide monooxygenase, found in Aspergillus oryzae (strain ATCC 42149 / RIB 40) (Yellow koji mold).